We begin with the raw amino-acid sequence, 579 residues long: Alpha-glucosidase (579 aa).

Catalysis depends on aspartate 212, which acts as the Nucleophile. Glutamate 269 serves as the catalytic Proton donor.

This sequence belongs to the glycosyl hydrolase 13 family.

The enzyme catalyses Hydrolysis of terminal, non-reducing (1-&gt;4)-linked alpha-D-glucose residues with release of alpha-D-glucose.. The protein is Alpha-glucosidase (mal1) of Schizosaccharomyces pombe (strain 972 / ATCC 24843) (Fission yeast).